Reading from the N-terminus, the 332-residue chain is Ubiquinone biosynthesis protein COQ4, mitochondrial (332 aa).

The N-terminal 24 residues, 1–24 (MLRLGVSRTPINRQFVGYEQRRHF), are a transit peptide targeting the mitochondrion. Residues histidine 210, aspartate 211, histidine 214, and glutamate 226 each contribute to the Zn(2+) site.

Belongs to the COQ4 family. Component of a multi-subunit COQ enzyme complex, composed of at least COQ3, COQ4, COQ5, COQ6, COQ7 and COQ9. Zn(2+) is required as a cofactor.

It localises to the mitochondrion inner membrane. The enzyme catalyses a 4-hydroxy-3-methoxy-5-(all-trans-polyprenyl)benzoate + H(+) = a 2-methoxy-6-(all-trans-polyprenyl)phenol + CO2. The protein operates within cofactor biosynthesis; ubiquinone biosynthesis. Lyase that catalyzes the C1-decarboxylation of 4-hydroxy-3-methoxy-5-(all-trans-polyprenyl)benzoic acid into 2-methoxy-6-(all-trans-polyprenyl)phenol during ubiquinone biosynthesis. This chain is Ubiquinone biosynthesis protein COQ4, mitochondrial, found in Zygosaccharomyces rouxii (strain ATCC 2623 / CBS 732 / NBRC 1130 / NCYC 568 / NRRL Y-229).